Reading from the N-terminus, the 154-residue chain is Transcriptional repressor NrdR (154 aa).

A zinc finger lies at C3–C34. The ATP-cone domain occupies L49–V139.

It belongs to the NrdR family. The cofactor is Zn(2+).

In terms of biological role, negatively regulates transcription of bacterial ribonucleotide reductase nrd genes and operons by binding to NrdR-boxes. The chain is Transcriptional repressor NrdR from Listeria welshimeri serovar 6b (strain ATCC 35897 / DSM 20650 / CCUG 15529 / CIP 8149 / NCTC 11857 / SLCC 5334 / V8).